A 778-amino-acid chain; its full sequence is MDYLWWIVLLIWTLIAPERGTVAQRSKSNVPRLKPSYKEMLESNNLLTFNGLANSSAYHTFLLDEERGRLFVGAKDHVLSFNLVDINMDQQLISWPSSPSRRDECKWAGKDVQKECANFIKVLQPFNQTHLYACGTGAFHPVCAHVEVGKRSEDNTFRLGSSFENGRGKSPYDPKLQTASMLIDGELYAGTSADFMGRDFAIFRTLGKHHPIRTEQHDSRWLNDPRFVSVHLIPESDNAEDDKIYLFFRENAIDGEQISKATHARIGQLCKNDFGGHRSLVNKWTTFLKARLVCSVPGLNGIDTHFDELQDVFLMSSKDPKNPIIYAVFTTSSNIFKGSAVCMYSMADIRRVFLGPYAHRDGPNYQWVPFLNRVPYPRPGTCPSKTFDGFESTKDFPDDVITFARSHPAMYNPVFPINNHPIIIKTDVDYQFTQIVVDRVEAEDGQYDVMFIGTDMGTVLKVVSIPRGTWHDLEEVLLEEMTVFREPTAITAMELSTKQQQLYLGSAIGVSQMPLHRCDVYGKACAECCLARDPYCAWDGSQCSRYFPTAKRRTRRQDIRNGDPLTQCSDLQHHDEADGEAGLLDKTVYGVENSSSFLECSPKSQRALIYWQFQRHGEDHKLEIKSDERVLGTEQGLLIRSLHQKDSGVYYCHAVEHGFIQTLLRLTLNVIPAEHLDDLLHRDPPDTNDPANGKMWYRDFLSLINPPSPNSVDQLCEQVWKRERKQRRQKANLLHASQSHTSQILHSSQSHAKWKLLQENKKGRNRRTHEMQRAPRSV.

An N-terminal signal peptide occupies residues 1-17 (MDYLWWIVLLIWTLIAP). In terms of domain architecture, Sema spans 32 to 515 (RLKPSYKEML…SAIGVSQMPL (484 aa)). N-linked (GlcNAc...) asparagine glycosylation is present at N54. The cysteines at positions 105 and 116 are disulfide-linked. N-linked (GlcNAc...) asparagine glycosylation is present at N127. 4 disulfides stabilise this stretch: C134-C143, C270-C382, C294-C342, and C518-C536. The Ig-like C2-type domain occupies 579-668 (GEAGLLDKTV…FIQTLLRLTL (90 aa)). N593 carries N-linked (GlcNAc...) asparagine glycosylation. The cysteines at positions 652 and 716 are disulfide-linked. A disordered region spans residues 727–778 (RRQKANLLHASQSHTSQILHSSQSHAKWKLLQENKKGRNRRTHEMQRAPRSV). Residues 735–751 (HASQSHTSQILHSSQSH) show a composition bias toward polar residues. Over residues 756–778 (LLQENKKGRNRRTHEMQRAPRSV) the composition is skewed to basic and acidic residues.

Belongs to the semaphorin family. As to expression, expressed in rhombomeres three and five, and in the posterior half of newly formed somites which is avoided by ventrally extending motor axons.

The protein localises to the secreted. In terms of biological role, might normally influence the midsegmental pathway choice of the ventrally extending motor axons by contributing to a repulsive domain in the posterior somite. This is Semaphorin-3ab (sema3ab) from Danio rerio (Zebrafish).